Reading from the N-terminus, the 137-residue chain is Peptide methionine sulfoxide reductase MsrB (137 aa).

One can recognise a MsrB domain in the interval 7-129 (AEELKKKLSE…NSASLAFSDE (123 aa)). The Zn(2+) site is built by Cys-46, Cys-49, Cys-95, and Cys-98. Cys-118 serves as the catalytic Nucleophile.

It belongs to the MsrB Met sulfoxide reductase family. Zn(2+) is required as a cofactor.

It catalyses the reaction L-methionyl-[protein] + [thioredoxin]-disulfide + H2O = L-methionyl-(R)-S-oxide-[protein] + [thioredoxin]-dithiol. This chain is Peptide methionine sulfoxide reductase MsrB, found in Salmonella arizonae (strain ATCC BAA-731 / CDC346-86 / RSK2980).